Consider the following 212-residue polypeptide: ATP-dependent dethiobiotin synthetase BioD (212 aa).

Residue 13 to 18 participates in ATP binding; it reads GIGKTV. Threonine 17 serves as a coordination point for Mg(2+). Residue lysine 33 is part of the active site. Serine 37 lines the substrate pocket. Glutamate 100 is a Mg(2+) binding site. ATP contacts are provided by residues 100–103, 160–161, and 184–186; these read EGAG, IS, and PLL.

This sequence belongs to the dethiobiotin synthetase family. Homodimer. Mg(2+) serves as cofactor.

The protein resides in the cytoplasm. The enzyme catalyses (7R,8S)-7,8-diammoniononanoate + CO2 + ATP = (4R,5S)-dethiobiotin + ADP + phosphate + 3 H(+). The protein operates within cofactor biosynthesis; biotin biosynthesis; biotin from 7,8-diaminononanoate: step 1/2. Functionally, catalyzes a mechanistically unusual reaction, the ATP-dependent insertion of CO2 between the N7 and N8 nitrogen atoms of 7,8-diaminopelargonic acid (DAPA, also called 7,8-diammoniononanoate) to form a ureido ring. The sequence is that of ATP-dependent dethiobiotin synthetase BioD from Brucella abortus (strain S19).